The primary structure comprises 485 residues: L-ornithine N(5)-oxygenase (485 aa).

FAD is bound by residues 49-57 and Gln-68; that span reads ERQQQFVWH. Lys-73 provides a ligand contact to L-ornithine. Val-134 provides a ligand contact to FAD. Residue Arg-243 coordinates NADP(+). Residues 257–260 and Asn-287 each bind L-ornithine; that span reads NEIF. 287 to 289 lines the NADP(+) pocket; that stretch reads NYS. 425–427 is an FAD binding site; sequence TLL. L-ornithine is bound at residue Ser-428.

It belongs to the lysine N(6)-hydroxylase/L-ornithine N(5)-oxygenase family. In terms of assembly, homotetramer. The cofactor is FAD.

The catalysed reaction is L-ornithine + NADH + O2 = N(5)-hydroxy-L-ornithine + NAD(+) + H2O. The enzyme catalyses L-ornithine + NADPH + O2 = N(5)-hydroxy-L-ornithine + NADP(+) + H2O. It functions in the pathway siderophore biosynthesis. In terms of biological role, L-ornithine N(5)-oxygenase; part of the gene cluster that mediates the biosynthesis of desferriferrichrome that chelates Fe(3+) to form ferrichrome. Fe(3+) is a key factor for induction of trap formation and the fungus uses the iron chelating desferriferrichrome to sequester Fe(3+) to inhibit trap formation and increase nematicidal activity. The biosynthesis of desferriferrichrome requires the action of the L-ornithine N(5)-oxygenase (LOO) Ao414 that hydroxylates L-ornithine at N(5), resulting in the formation of N(5)-hydroxyl-L-ornithine, which is subsequently N-acetylated to yield N(5)-acetyl-N(5)-hydroxy-L-ornithine (L-AHO). L-AHO harbors one hydroxamate moiety, which is the key core responsible for chelating iron. Then, L-AHO is further condensated with glycines to form desferriferrichrome through the NRPS protein Ao415. This chain is L-ornithine N(5)-oxygenase, found in Arthrobotrys oligospora (strain ATCC 24927 / CBS 115.81 / DSM 1491) (Nematode-trapping fungus).